Here is a 101-residue protein sequence, read N- to C-terminus: Urease subunit beta (101 aa).

Belongs to the urease beta subunit family. As to quaternary structure, heterotrimer of UreA (gamma), UreB (beta) and UreC (alpha) subunits. Three heterotrimers associate to form the active enzyme.

The protein localises to the cytoplasm. It carries out the reaction urea + 2 H2O + H(+) = hydrogencarbonate + 2 NH4(+). The protein operates within nitrogen metabolism; urea degradation; CO(2) and NH(3) from urea (urease route): step 1/1. The sequence is that of Urease subunit beta from Hahella chejuensis (strain KCTC 2396).